The chain runs to 363 residues: MGPGEALLAGLLVMVLAVALLSNALVLLCCAYSAELRTRASGVLLVNLSLGHLLLAALDMPFTLLGVMRGRTPSAPGACQVIGFLDTFLASNAALSVAALSADQWLAVGFPLRYAGRLRPRYAGLLLGCAWGQSLAFSGAALGCSWLGYSSAFASCSLRLPPEPERPRFAAFTATLHAVGFVLPLAVLCLTSLQVHRVARRHCQRMDTVTMKALALLADLHPSVRQRCLIQQKRRRHRATRKIGIAIATFLICFAPYVMTRLAELVPFVTVNAQWGILSKCLTYSKAVADPFTYSLLRRPFRQVLAGMVHRLLKRTPRPASTHDSSLDVAGMVHQLLKRTPRPASTHNGSVDTENDSCLQQTH.

Over 1–7 (MGPGEAL) the chain is Extracellular. The chain crosses the membrane as a helical span at residues 8-28 (LAGLLVMVLAVALLSNALVLL). Residues 29–47 (CCAYSAELRTRASGVLLVN) lie on the Cytoplasmic side of the membrane. Residues 48-68 (LSLGHLLLAALDMPFTLLGVM) traverse the membrane as a helical segment. Topologically, residues 69–80 (RGRTPSAPGACQ) are extracellular. Residues Cys79 and Cys156 are joined by a disulfide bond. The chain crosses the membrane as a helical span at residues 81–101 (VIGFLDTFLASNAALSVAALS). Residues 102–122 (ADQWLAVGFPLRYAGRLRPRY) are Cytoplasmic-facing. A helical transmembrane segment spans residues 123–143 (AGLLLGCAWGQSLAFSGAALG). Topologically, residues 144-168 (CSWLGYSSAFASCSLRLPPEPERPR) are extracellular. The chain crosses the membrane as a helical span at residues 169–189 (FAAFTATLHAVGFVLPLAVLC). Topologically, residues 190 to 242 (LTSLQVHRVARRHCQRMDTVTMKALALLADLHPSVRQRCLIQQKRRRHRATRK) are cytoplasmic. Residues 243 to 263 (IGIAIATFLICFAPYVMTRLA) traverse the membrane as a helical segment. Topologically, residues 264-277 (ELVPFVTVNAQWGI) are extracellular. A helical transmembrane segment spans residues 278–297 (LSKCLTYSKAVADPFTYSLL). Topologically, residues 298 to 363 (RRPFRQVLAG…ENDSCLQQTH (66 aa)) are cytoplasmic. Residues 340–363 (TPRPASTHNGSVDTENDSCLQQTH) are disordered. The segment covering 343-363 (PASTHNGSVDTENDSCLQQTH) has biased composition (polar residues).

Belongs to the G-protein coupled receptor 1 family. High level of expression in placenta. Expressed throughout the brain at low level. No expression detected in skeletal muscle, lung, heart, liver, pancreas, or kidney.

The protein localises to the cell membrane. In terms of biological role, orphan receptor. Displays a significant level of constitutive activity. Its effect is mediated by G(s)-alpha protein that stimulate adenylate cyclase, resulting in an elevation of intracellular cAMP. The sequence is that of G-protein coupled receptor 78 (GPR78) from Homo sapiens (Human).